The primary structure comprises 591 residues: L-fucose isomerase (591 aa).

Active-site proton acceptor residues include Glu337 and Asp361. Glu337, Asp361, and His528 together coordinate Mn(2+).

This sequence belongs to the L-fucose isomerase family. As to quaternary structure, homohexamer. It depends on Mn(2+) as a cofactor.

The protein localises to the cytoplasm. It catalyses the reaction L-fucose = L-fuculose. It functions in the pathway carbohydrate degradation; L-fucose degradation; L-lactaldehyde and glycerone phosphate from L-fucose: step 1/3. Converts the aldose L-fucose into the corresponding ketose L-fuculose. The polypeptide is L-fucose isomerase (Escherichia coli (strain SE11)).